The primary structure comprises 379 residues: MTPIRYELIKTCKQTGARLGILHTPHGSFETPMFMPVGTLATVKTLSPEELKEMGAGVILSNTYHLWLRPGHDIVKEAGGLHSFMNWDRGILTDSGGFQVFSLSEFRRIEEEGVYFRNHLNGDQLFLSPEKAMEIQNALGSDIMMAFDECPPYPATYEYMKRSVERTSRWAERCLKAHQRPNEQGLFGIVQGGEFEDLRKQSAQDLVSLDFPGYAVGGLSVGEPKEVMNRVLEFTTPLLPANKPRYLMGVGSPDSLIDGAIRGIDMFDCVLPTRIGRNGTVMTSEGRVVIKNAKYARDFTPLDPNCDCYTCRNYTRAYIRHLIKCDETFGIRLTSYHNVYFLIKLMEQVRQAIREDRLGDFREQFFEQYGFNKPNAKNF.

The active-site Proton acceptor is D94. Residues 94-98, D148, Q191, and G218 contribute to the substrate site; that span reads DSGGF. The RNA binding stretch occupies residues 249–255; it reads GVGSPDS. The Nucleophile role is filled by D268. Residues 273-277 are RNA binding; important for wobble base 34 recognition; it reads TRIGR. Positions 306, 308, 311, and 337 each coordinate Zn(2+).

Belongs to the queuine tRNA-ribosyltransferase family. Homodimer. Within each dimer, one monomer is responsible for RNA recognition and catalysis, while the other monomer binds to the replacement base PreQ1. Zn(2+) is required as a cofactor.

It catalyses the reaction 7-aminomethyl-7-carbaguanine + guanosine(34) in tRNA = 7-aminomethyl-7-carbaguanosine(34) in tRNA + guanine. It participates in tRNA modification; tRNA-queuosine biosynthesis. Its function is as follows. Catalyzes the base-exchange of a guanine (G) residue with the queuine precursor 7-aminomethyl-7-deazaguanine (PreQ1) at position 34 (anticodon wobble position) in tRNAs with GU(N) anticodons (tRNA-Asp, -Asn, -His and -Tyr). Catalysis occurs through a double-displacement mechanism. The nucleophile active site attacks the C1' of nucleotide 34 to detach the guanine base from the RNA, forming a covalent enzyme-RNA intermediate. The proton acceptor active site deprotonates the incoming PreQ1, allowing a nucleophilic attack on the C1' of the ribose to form the product. After dissociation, two additional enzymatic reactions on the tRNA convert PreQ1 to queuine (Q), resulting in the hypermodified nucleoside queuosine (7-(((4,5-cis-dihydroxy-2-cyclopenten-1-yl)amino)methyl)-7-deazaguanosine). This is Queuine tRNA-ribosyltransferase from Anoxybacillus flavithermus (strain DSM 21510 / WK1).